A 201-amino-acid chain; its full sequence is Probable chemoreceptor glutamine deamidase CheD 1 (201 aa).

It belongs to the CheD family.

It carries out the reaction L-glutaminyl-[protein] + H2O = L-glutamyl-[protein] + NH4(+). Its function is as follows. Probably deamidates glutamine residues to glutamate on methyl-accepting chemotaxis receptors (MCPs), playing an important role in chemotaxis. The polypeptide is Probable chemoreceptor glutamine deamidase CheD 1 (Geobacter sulfurreducens (strain ATCC 51573 / DSM 12127 / PCA)).